The following is a 418-amino-acid chain: MDIGDFVKLELENTTYSGTVMPSLNEDTVVIKMKSGYNVGLDKKKIKNIEILESGDKPKYGLPPLNLEKNPKLKNISILSTGGTVASRVDYKTGAVHPAFTADDLIRAVPELMDIANIKGKVILNILSENMLPAYWKMTADAIKEEIENGAEGIVIAHGTDTMHYTASALSFMVTSEVPIILVGAQRSSDRPSSDAALNIIAAVKAATEPIKGVYVLMHGETGDTVCHLHEGTKVRKLHSSRRDAFKSVNETPIAEINPFIKKVTYLRDVKSQDKSKIKEVVLNTDLEEKVALIKVYPGIDSEILKFYVDNGYKGIILEGTGLGHTPETFFEGIDYANENNVLVAMTTQTINGRVNMNVYSNGRELQAKGVIPCEDMLPEVAFVKLMHLLGNYGFEESKELMSKNIVGEINESINLEC.

The Asparaginase/glutaminase domain maps to Lys-74–Asn-405. Residues Thr-84, Thr-160, Asp-161, and Lys-237 contribute to the active site.

Belongs to the asparaginase 1 family. GatD subfamily. Heterodimer of GatD and GatE.

It catalyses the reaction L-glutamyl-tRNA(Gln) + L-glutamine + ATP + H2O = L-glutaminyl-tRNA(Gln) + L-glutamate + ADP + phosphate + H(+). Allows the formation of correctly charged Gln-tRNA(Gln) through the transamidation of misacylated Glu-tRNA(Gln) in organisms which lack glutaminyl-tRNA synthetase. The reaction takes place in the presence of glutamine and ATP through an activated gamma-phospho-Glu-tRNA(Gln). The GatDE system is specific for glutamate and does not act on aspartate. The protein is Glutamyl-tRNA(Gln) amidotransferase subunit D of Methanococcus maripaludis (strain C5 / ATCC BAA-1333).